The following is a 150-amino-acid chain: UPF0756 membrane protein NT05HA_0561 (150 aa).

The next 4 membrane-spanning stretches (helical) occupy residues 1 to 21 (MSLQ…LGIF), 52 to 72 (YGLS…LVSG), 81 to 101 (AFVS…AWLA), and 128 to 148 (FLGG…VLIG).

Belongs to the UPF0756 family.

It localises to the cell membrane. This Aggregatibacter aphrophilus (strain NJ8700) (Haemophilus aphrophilus) protein is UPF0756 membrane protein NT05HA_0561.